The sequence spans 389 residues: MQTTEPMTPPAPLASAQTVIDLGAIDHNVRVLRELAGSADVMAVVKADAYGHGALPVARTALAAGAAALGVATIPEALALREGGITAPVLAWLHPPGTDFAPAIAADVEVAVSSRRQLEQVTAAAAEVGRTATVTVKVDTGLSRNGVGAADYPEVLDVLRRAQADGAIRVRGLMSHLVHGDDPENPFNGLQGQRLADMRVYAREHGVDYEVAHLCNSPAAMTRPDLAFEMVRPGISLYGLSPIPERGDMGLRPAMTLKCPVALVRSVHAGDGVSYGHRWVADRDTTLGLLPIGYADGVYRALSGRIDVLIKGRRRRAVGRICMDQFVVDLGPDADDVAVGDDAILFGPGANGEPTAQDWAELLDTIHYEVVTSPRGRVTRTYLPAGQQD.

Catalysis depends on lysine 46, which acts as the Proton acceptor; specific for D-alanine. Residue lysine 46 is modified to N6-(pyridoxal phosphate)lysine. Arginine 144 provides a ligand contact to substrate. Tyrosine 275 acts as the Proton acceptor; specific for L-alanine in catalysis. Substrate is bound at residue methionine 323.

It belongs to the alanine racemase family. Requires pyridoxal 5'-phosphate as cofactor.

The catalysed reaction is L-alanine = D-alanine. It participates in amino-acid biosynthesis; D-alanine biosynthesis; D-alanine from L-alanine: step 1/1. Its function is as follows. Catalyzes the interconversion of L-alanine and D-alanine. May also act on other amino acids. The chain is Alanine racemase (alr) from Mycolicibacterium smegmatis (strain ATCC 700084 / mc(2)155) (Mycobacterium smegmatis).